Here is a 498-residue protein sequence, read N- to C-terminus: Putative ABC transporter ATP-binding protein MM_2387 (498 aa).

2 consecutive ABC transporter domains span residues Ile2 to Ser242 and Ile258 to Lys490. Residues Gly36–Thr43 and Gly290–Thr297 contribute to the ATP site.

It belongs to the ABC transporter superfamily.

The protein resides in the cell membrane. Its function is as follows. Probably part of an ABC transporter complex. Responsible for energy coupling to the transport system. The protein is Putative ABC transporter ATP-binding protein MM_2387 of Methanosarcina mazei (strain ATCC BAA-159 / DSM 3647 / Goe1 / Go1 / JCM 11833 / OCM 88) (Methanosarcina frisia).